A 203-amino-acid chain; its full sequence is Pyridoxine/pyridoxamine 5'-phosphate oxidase (203 aa).

FMN-binding positions include 50 to 55 (RMVLLK), 65 to 66 (YT), K71, K72, and Q94. Position 55 (K55) interacts with substrate. Residues Y112, R116, and S120 each coordinate substrate. FMN is bound by residues 129 to 130 (QS) and W174. 180-182 (RLH) contacts substrate. FMN is bound at residue R184.

The protein belongs to the pyridoxamine 5'-phosphate oxidase family. As to quaternary structure, homodimer. FMN is required as a cofactor.

It carries out the reaction pyridoxamine 5'-phosphate + O2 + H2O = pyridoxal 5'-phosphate + H2O2 + NH4(+). The enzyme catalyses pyridoxine 5'-phosphate + O2 = pyridoxal 5'-phosphate + H2O2. It functions in the pathway cofactor metabolism; pyridoxal 5'-phosphate salvage; pyridoxal 5'-phosphate from pyridoxamine 5'-phosphate: step 1/1. The protein operates within cofactor metabolism; pyridoxal 5'-phosphate salvage; pyridoxal 5'-phosphate from pyridoxine 5'-phosphate: step 1/1. Catalyzes the oxidation of either pyridoxine 5'-phosphate (PNP) or pyridoxamine 5'-phosphate (PMP) into pyridoxal 5'-phosphate (PLP). The chain is Pyridoxine/pyridoxamine 5'-phosphate oxidase from Brucella canis (strain ATCC 23365 / NCTC 10854 / RM-666).